A 321-amino-acid polypeptide reads, in one-letter code: Lipoyl synthase (321 aa).

[4Fe-4S] cluster contacts are provided by Cys-68, Cys-73, Cys-79, Cys-94, Cys-98, Cys-101, and Ser-308. A Radical SAM core domain is found at 80-297; that stretch reads FNHGTATFMI…KAEALAMGFT (218 aa).

This sequence belongs to the radical SAM superfamily. Lipoyl synthase family. [4Fe-4S] cluster is required as a cofactor.

The protein resides in the cytoplasm. It catalyses the reaction [[Fe-S] cluster scaffold protein carrying a second [4Fe-4S](2+) cluster] + N(6)-octanoyl-L-lysyl-[protein] + 2 oxidized [2Fe-2S]-[ferredoxin] + 2 S-adenosyl-L-methionine + 4 H(+) = [[Fe-S] cluster scaffold protein] + N(6)-[(R)-dihydrolipoyl]-L-lysyl-[protein] + 4 Fe(3+) + 2 hydrogen sulfide + 2 5'-deoxyadenosine + 2 L-methionine + 2 reduced [2Fe-2S]-[ferredoxin]. The protein operates within protein modification; protein lipoylation via endogenous pathway; protein N(6)-(lipoyl)lysine from octanoyl-[acyl-carrier-protein]: step 2/2. Its function is as follows. Catalyzes the radical-mediated insertion of two sulfur atoms into the C-6 and C-8 positions of the octanoyl moiety bound to the lipoyl domains of lipoate-dependent enzymes, thereby converting the octanoylated domains into lipoylated derivatives. This Salmonella typhi protein is Lipoyl synthase.